A 689-amino-acid polypeptide reads, in one-letter code: Glycine--tRNA ligase beta subunit (689 aa).

It belongs to the class-II aminoacyl-tRNA synthetase family. Tetramer of two alpha and two beta subunits.

It is found in the cytoplasm. The catalysed reaction is tRNA(Gly) + glycine + ATP = glycyl-tRNA(Gly) + AMP + diphosphate. This chain is Glycine--tRNA ligase beta subunit, found in Shewanella baltica (strain OS185).